Here is a 350-residue protein sequence, read N- to C-terminus: Holliday junction branch migration complex subunit RuvB (350 aa).

Residues 1-182 are large ATPase domain (RuvB-L); it reads MEDRIVTPLN…FGVLCPMDFY (182 aa). Residues Leu-21, Arg-22, Gly-63, Lys-66, Thr-67, Thr-68, 129–131, Arg-172, Tyr-182, and Arg-219 each bind ATP; that span reads EDY. Thr-67 is a Mg(2+) binding site. The interval 183–253 is small ATPAse domain (RuvB-S); the sequence is DQEELSEIVV…TSKAALELLE (71 aa). Positions 256-350 are head domain (RuvB-H); sequence KEGFDSIDNK…KQSSLFDGEV (95 aa). Residues Arg-311 and Arg-316 each coordinate DNA.

This sequence belongs to the RuvB family. In terms of assembly, homohexamer. Forms an RuvA(8)-RuvB(12)-Holliday junction (HJ) complex. HJ DNA is sandwiched between 2 RuvA tetramers; dsDNA enters through RuvA and exits via RuvB. An RuvB hexamer assembles on each DNA strand where it exits the tetramer. Each RuvB hexamer is contacted by two RuvA subunits (via domain III) on 2 adjacent RuvB subunits; this complex drives branch migration. In the full resolvosome a probable DNA-RuvA(4)-RuvB(12)-RuvC(2) complex forms which resolves the HJ.

Its subcellular location is the cytoplasm. It catalyses the reaction ATP + H2O = ADP + phosphate + H(+). In terms of biological role, the RuvA-RuvB-RuvC complex processes Holliday junction (HJ) DNA during genetic recombination and DNA repair, while the RuvA-RuvB complex plays an important role in the rescue of blocked DNA replication forks via replication fork reversal (RFR). RuvA specifically binds to HJ cruciform DNA, conferring on it an open structure. The RuvB hexamer acts as an ATP-dependent pump, pulling dsDNA into and through the RuvAB complex. RuvB forms 2 homohexamers on either side of HJ DNA bound by 1 or 2 RuvA tetramers; 4 subunits per hexamer contact DNA at a time. Coordinated motions by a converter formed by DNA-disengaged RuvB subunits stimulates ATP hydrolysis and nucleotide exchange. Immobilization of the converter enables RuvB to convert the ATP-contained energy into a lever motion, pulling 2 nucleotides of DNA out of the RuvA tetramer per ATP hydrolyzed, thus driving DNA branch migration. The RuvB motors rotate together with the DNA substrate, which together with the progressing nucleotide cycle form the mechanistic basis for DNA recombination by continuous HJ branch migration. Branch migration allows RuvC to scan DNA until it finds its consensus sequence, where it cleaves and resolves cruciform DNA. The chain is Holliday junction branch migration complex subunit RuvB from Clostridium kluyveri (strain NBRC 12016).